The sequence spans 660 residues: FAST kinase domain-containing protein 3, mitochondrial (660 aa).

The transit peptide at 1 to 57 (MALVTLRRNLYHLSDFRIHGALAALKTQQVNHVHKTVKEHLCPWFWSQHPGPIRVRF) directs the protein to the mitochondrion. One can recognise an RAP domain in the interval 591–649 (VALCIDGPKRFCLNSKHLLGKEATKQRHLRLLGYQVVQIPYYEIEMLKSRLELVDYLQG).

The protein belongs to the FAST kinase family.

The protein resides in the mitochondrion. Required for normal mitochondrial respiration. Increases steady-state levels and half-lives of a subset of mature mitochondrial mRNAs MT-ND2, MT-ND3, MT-CYTB, MT-CO2, and MT-ATP8/6. Promotes MT-CO1 mRNA translation and increases mitochondrial complex IV assembly and activity. The protein is FAST kinase domain-containing protein 3, mitochondrial (FASTKD3) of Bos taurus (Bovine).